The chain runs to 507 residues: Cuticlin-4 (507 aa).

The first 19 residues, 1 to 19 (MFHFTRILAAFLLPTLCFC), serve as a signal peptide directing secretion. The Extracellular portion of the chain corresponds to 20–471 (GYSTAPSSTV…KTCFSTSRMY (452 aa)). The ZP domain occupies 42–280 (VCETASISLL…YGCSNTQPQC (239 aa)). A disordered region spans residues 292-350 (KTTETAEPYPYDSHESGYPTRPANYPVASSRYPIPTTQAPASYPSSPAPPPPGADIDNG). Asn374 and Asn408 each carry an N-linked (GlcNAc...) asparagine glycan. The helical transmembrane segment at 472-492 (FTLILLCLLFATTVVVFIVIV) threads the bilayer. Residues 493 to 507 (QKQRQILAQTAFFKP) lie on the Cytoplasmic side of the membrane.

The protein localises to the cell membrane. Its function is as follows. Plays a role in alae formation and subsequent cuticle attachment in adults. The sequence is that of Cuticlin-4 from Caenorhabditis elegans.